A 144-amino-acid polypeptide reads, in one-letter code: Large ribosomal subunit protein uL15 (144 aa).

Positions 24 to 52 (GSGLGKTAGRGHKGLKSRSGGSVRPGFEG) are disordered.

It belongs to the universal ribosomal protein uL15 family. As to quaternary structure, part of the 50S ribosomal subunit.

In terms of biological role, binds to the 23S rRNA. The chain is Large ribosomal subunit protein uL15 from Cellvibrio japonicus (strain Ueda107) (Pseudomonas fluorescens subsp. cellulosa).